The following is a 438-amino-acid chain: UDP-N-acetylmuramoylalanine--D-glutamate ligase (438 aa).

Residue 112 to 118 participates in ATP binding; it reads GSNGKST.

Belongs to the MurCDEF family.

It localises to the cytoplasm. The catalysed reaction is UDP-N-acetyl-alpha-D-muramoyl-L-alanine + D-glutamate + ATP = UDP-N-acetyl-alpha-D-muramoyl-L-alanyl-D-glutamate + ADP + phosphate + H(+). The protein operates within cell wall biogenesis; peptidoglycan biosynthesis. Cell wall formation. Catalyzes the addition of glutamate to the nucleotide precursor UDP-N-acetylmuramoyl-L-alanine (UMA). The protein is UDP-N-acetylmuramoylalanine--D-glutamate ligase of Shigella sonnei (strain Ss046).